The primary structure comprises 292 residues: tRNA (adenine(9)-N1)-methyltransferase (292 aa).

An SAM-dependent MTase TRM10-type domain is found at 72-253 (TFRKGGKKVS…ISLQSKSDKI (182 aa)).

It belongs to the class IV-like SAM-binding methyltransferase superfamily. TRM10 family.

Its subcellular location is the cytoplasm. The catalysed reaction is adenosine(9) in tRNA + S-adenosyl-L-methionine = N(1)-methyladenosine(9) in tRNA + S-adenosyl-L-homocysteine + H(+). Its function is as follows. Catalyzes the S-adenosyl-L-methionine-dependent formation of N(1)-methyladenine at position 9 (m1A9) in tRNA. This is tRNA (adenine(9)-N1)-methyltransferase from Sulfolobus acidocaldarius (strain ATCC 33909 / DSM 639 / JCM 8929 / NBRC 15157 / NCIMB 11770).